Here is a 380-residue protein sequence, read N- to C-terminus: Anhydro-N-acetylmuramic acid kinase (380 aa).

9-16 (GTSVDGID) serves as a coordination point for ATP.

It belongs to the anhydro-N-acetylmuramic acid kinase family.

The enzyme catalyses 1,6-anhydro-N-acetyl-beta-muramate + ATP + H2O = N-acetyl-D-muramate 6-phosphate + ADP + H(+). It functions in the pathway amino-sugar metabolism; 1,6-anhydro-N-acetylmuramate degradation. Its pathway is cell wall biogenesis; peptidoglycan recycling. In terms of biological role, catalyzes the specific phosphorylation of 1,6-anhydro-N-acetylmuramic acid (anhMurNAc) with the simultaneous cleavage of the 1,6-anhydro ring, generating MurNAc-6-P. Is required for the utilization of anhMurNAc either imported from the medium or derived from its own cell wall murein, and thus plays a role in cell wall recycling. The sequence is that of Anhydro-N-acetylmuramic acid kinase from Cyanothece sp. (strain PCC 7425 / ATCC 29141).